The chain runs to 383 residues: Creatine kinase, testis isozyme (383 aa).

A Phosphagen kinase N-terminal domain is found at 14–100; that stretch reads KRLSPEEEFP…LDPIIEDRHG (87 aa). Basic and acidic residues predominate over residues 99-112; sequence HGGYKPTDKHKTDL. The disordered stretch occupies residues 99 to 119; the sequence is HGGYKPTDKHKTDLNPDNLKG. Residues 127-369 form the Phosphagen kinase C-terminal domain; sequence YVISSRVRTG…KLLVEMEKKL (243 aa). ATP contacts are provided by residues 130-134, His193, Arg238, Arg294, 322-327, and Asp337; these read SSRVR and RGTGGV.

This sequence belongs to the ATP:guanido phosphotransferase family. As to expression, exists in many tissues, but preferentially in testis.

The enzyme catalyses creatine + ATP = N-phosphocreatine + ADP + H(+). In terms of biological role, reversibly catalyzes the transfer of phosphate between ATP and various phosphogens (e.g. creatine phosphate). Creatine kinase isoenzymes play a central role in energy transduction in tissues with large, fluctuating energy demands, such as skeletal muscle, heart, brain and spermatozoa. This Oncorhynchus mykiss (Rainbow trout) protein is Creatine kinase, testis isozyme (tck1).